Reading from the N-terminus, the 101-residue chain is Apolipoprotein C-II (101 aa).

An N-terminal signal peptide occupies residues 1–17 (MGTRFLLALCLVLLVLG). A lipid binding region spans residues 66 to 74 (AVDEKLRDL). The tract at residues 78 to 101 (STAAMSTYTGIFTDQVLSVLKGEE) is lipoprotein lipase cofactor.

The protein belongs to the apolipoprotein C2 family. In terms of processing, proapolipoprotein C-II is synthesized as a sialic acid containing glycoprotein which is subsequently desialylated prior to its proteolytic processing. Proapolipoprotein C-II, the major form found in plasma undergoes proteolytic cleavage of its N-terminal hexapeptide to generate apolipoprotein C-II, which occurs as the minor form in plasma.

Its subcellular location is the secreted. In terms of biological role, component of chylomicrons, very low-density lipoproteins (VLDL), low-density lipoproteins (LDL), and high-density lipoproteins (HDL) in plasma. Plays an important role in lipoprotein metabolism as an activator of lipoprotein lipase. Both proapolipoprotein C-II and apolipoprotein C-II can activate lipoprotein lipase. The chain is Apolipoprotein C-II (APOC2) from Chlorocebus sabaeus (Green monkey).